Reading from the N-terminus, the 192-residue chain is Orotate phosphoribosyltransferase (192 aa).

Residue 116 to 124 (EDIVTTGLS) participates in 5-phospho-alpha-D-ribose 1-diphosphate binding. Orotate is bound by residues T120 and R148.

This sequence belongs to the purine/pyrimidine phosphoribosyltransferase family. PyrE subfamily. Homodimer. The cofactor is Mg(2+).

The catalysed reaction is orotidine 5'-phosphate + diphosphate = orotate + 5-phospho-alpha-D-ribose 1-diphosphate. It functions in the pathway pyrimidine metabolism; UMP biosynthesis via de novo pathway; UMP from orotate: step 1/2. Its function is as follows. Catalyzes the transfer of a ribosyl phosphate group from 5-phosphoribose 1-diphosphate to orotate, leading to the formation of orotidine monophosphate (OMP). The polypeptide is Orotate phosphoribosyltransferase (Bartonella henselae (strain ATCC 49882 / DSM 28221 / CCUG 30454 / Houston 1) (Rochalimaea henselae)).